The sequence spans 164 residues: Phosphopantetheine adenylyltransferase (164 aa).

A substrate-binding site is contributed by Ser-9. Residues 9-10 (SF) and His-17 each bind ATP. Substrate is bound by residues Lys-41, Leu-73, and Lys-87. ATP-binding positions include 88–90 (GLR), Glu-98, and 122–128 (YSYLSSS).

This sequence belongs to the bacterial CoaD family. In terms of assembly, homohexamer. Mg(2+) serves as cofactor.

The protein resides in the cytoplasm. The catalysed reaction is (R)-4'-phosphopantetheine + ATP + H(+) = 3'-dephospho-CoA + diphosphate. The protein operates within cofactor biosynthesis; coenzyme A biosynthesis; CoA from (R)-pantothenate: step 4/5. In terms of biological role, reversibly transfers an adenylyl group from ATP to 4'-phosphopantetheine, yielding dephospho-CoA (dPCoA) and pyrophosphate. The protein is Phosphopantetheine adenylyltransferase of Rhodococcus opacus (strain B4).